The primary structure comprises 163 residues: Nucleotide-binding protein MS1759 (163 aa).

Belongs to the YajQ family.

Its function is as follows. Nucleotide-binding protein. In Mannheimia succiniciproducens (strain KCTC 0769BP / MBEL55E), this protein is Nucleotide-binding protein MS1759.